The primary structure comprises 491 residues: Limb region 1 homolog-like protein (491 aa).

The Extracellular portion of the chain corresponds to 1 to 20; sequence METEDVTVREQIFHDRVRET. The chain crosses the membrane as a helical span at residues 21 to 41; that stretch reads IICVLLFICLYILSHFILTHF. At 42 to 59 the chain is on the cytoplasmic side; the sequence is KKSAEFVTDDIEDATVNK. Residues 60–80 traverse the membrane as a helical segment; sequence IALWLCTFTLSVAVCAVLLLP. Topologically, residues 81 to 111 are extracellular; that stretch reads ISILSNEVLLTFPHSYYMQWLNGSLIRGLWN. A helical membrane pass occupies residues 112–132; that stretch reads LVFLFSNLSLVFLMPFAYFFT. Residues 133-152 lie on the Cytoplasmic side of the membrane; sequence ESEGFAGSKKGVMARVYETA. The chain crosses the membrane as a helical span at residues 153–173; the sequence is VMLLLLSLLVLGIVWVASALL. Residues 174–192 lie on the Extracellular side of the membrane; that stretch reads HHNTARESLYDLWEYYLPY. Residues 193 to 213 form a helical membrane-spanning segment; that stretch reads LYSGISLFGVLLLLLCTPFGL. Residues 214–292 are Cytoplasmic-facing; the sequence is SRMFSVTGSL…RKRASPWQRN (79 aa). The helical transmembrane segment at 293-313 threads the bilayer; it reads LVYPVAMLLLLALTAVSVLMV. Over 314-346 the chain is Extracellular; sequence CFHVLELLFDESAMPRGMEDPHLGLASFSMLGS. The chain crosses the membrane as a helical span at residues 347-367; the sequence is LGAAVQVVIILYLMVSSVVGF. Topologically, residues 368-384 are cytoplasmic; it reads YSSPLFTGLLPRAQDTT. Residues 385–405 traverse the membrane as a helical segment; it reads LTQIIGNCVSLLILSSALPVF. Over 406–427 the chain is Extracellular; the sequence is SRTLGITKFDLLGDFGRHDWLG. Residues 428-448 form a helical membrane-spanning segment; the sequence is SFHIVFLYNMLFAGLTSACLI. Topologically, residues 449 to 491 are cytoplasmic; sequence NTVTWALQRELIRAFGLHRLPLTVSRSTIPLKLLLANGLSKIH.

This sequence belongs to the LIMR family. As to quaternary structure, dimer. Can also form higher oligomers.

It localises to the cell membrane. The protein localises to the endoplasmic reticulum membrane. Its function is as follows. May play a role in lymphocyte development by negatively regulating the canonical Wnt signaling pathway. May act as a LCN1 receptor. The polypeptide is Limb region 1 homolog-like protein (lmbr1l) (Danio rerio (Zebrafish)).